The chain runs to 150 residues: Endoribonuclease YbeY (150 aa).

Residues H108, H112, and H118 each contribute to the Zn(2+) site.

It belongs to the endoribonuclease YbeY family. It depends on Zn(2+) as a cofactor.

It is found in the cytoplasm. Single strand-specific metallo-endoribonuclease involved in late-stage 70S ribosome quality control and in maturation of the 3' terminus of the 16S rRNA. In Methylococcus capsulatus (strain ATCC 33009 / NCIMB 11132 / Bath), this protein is Endoribonuclease YbeY.